The chain runs to 365 residues: tRNA N6-adenosine threonylcarbamoyltransferase (365 aa).

Fe cation contacts are provided by His-119 and His-123. Residues 141 to 145 (LVSGG), Asp-174, Gly-187, and Asn-288 contribute to the substrate site. Residue Asp-316 coordinates Fe cation.

Belongs to the KAE1 / TsaD family. Requires Fe(2+) as cofactor.

The protein localises to the cytoplasm. It carries out the reaction L-threonylcarbamoyladenylate + adenosine(37) in tRNA = N(6)-L-threonylcarbamoyladenosine(37) in tRNA + AMP + H(+). Required for the formation of a threonylcarbamoyl group on adenosine at position 37 (t(6)A37) in tRNAs that read codons beginning with adenine. Is involved in the transfer of the threonylcarbamoyl moiety of threonylcarbamoyl-AMP (TC-AMP) to the N6 group of A37, together with TsaE and TsaB. TsaD likely plays a direct catalytic role in this reaction. The chain is tRNA N6-adenosine threonylcarbamoyltransferase from Rhizobium etli (strain CIAT 652).